A 706-amino-acid polypeptide reads, in one-letter code: Termination factor NPH-I homolog (706 aa).

The Helicase ATP-binding domain occupies 62-227 (IGQGENTRGL…VPCFNMLSGR (166 aa)). 75–82 (HQMGMGKT) is a binding site for ATP. The DEAH box motif lies at 168–171 (DEAH). Residues 378–599 (KIVCMLKNIK…HLNSAFRDLL (222 aa)) form the Helicase C-terminal domain.

The protein belongs to the DEAD box helicase family. DEAH subfamily. In terms of assembly, part of the viral DNA-directed RNA polymerase that consists of 8 polII-like subunits (RPB1, RPB2, RPB3, RPB5, RPB6, RPB7, RPB9, RPB10), a capping enzyme and a termination factor.

The protein resides in the virion. Putative DNA-dependent ATPase required for providing the needed energy to achieve the termination of early transcripts. The protein is Termination factor NPH-I homolog of African swine fever virus (isolate Pig/Kenya/KEN-50/1950) (ASFV).